The primary structure comprises 52 residues: UPF0181 protein HD_1137 (52 aa).

The protein belongs to the UPF0181 family.

The chain is UPF0181 protein HD_1137 from Haemophilus ducreyi (strain 35000HP / ATCC 700724).